We begin with the raw amino-acid sequence, 103 residues long: uncharacterized protein (103 aa).

This is an uncharacterized protein from Bacillus subtilis (strain 168).